The sequence spans 158 residues: ATP synthase subunit b' (158 aa).

The helical transmembrane segment at 24–44 threads the bilayer; the sequence is ATLPLMAVQILVLVFLLNAVF.

It belongs to the ATPase B chain family. In terms of assembly, F-type ATPases have 2 components, F(1) - the catalytic core - and F(0) - the membrane proton channel. F(1) has five subunits: alpha(3), beta(3), gamma(1), delta(1), epsilon(1). F(0) has four main subunits: a(1), b(1), b'(1) and c(10-14). The alpha and beta chains form an alternating ring which encloses part of the gamma chain. F(1) is attached to F(0) by a central stalk formed by the gamma and epsilon chains, while a peripheral stalk is formed by the delta, b and b' chains.

Its subcellular location is the cellular thylakoid membrane. In terms of biological role, f(1)F(0) ATP synthase produces ATP from ADP in the presence of a proton or sodium gradient. F-type ATPases consist of two structural domains, F(1) containing the extramembraneous catalytic core and F(0) containing the membrane proton channel, linked together by a central stalk and a peripheral stalk. During catalysis, ATP synthesis in the catalytic domain of F(1) is coupled via a rotary mechanism of the central stalk subunits to proton translocation. Functionally, component of the F(0) channel, it forms part of the peripheral stalk, linking F(1) to F(0). The b'-subunit is a diverged and duplicated form of b found in plants and photosynthetic bacteria. The polypeptide is ATP synthase subunit b' (Synechococcus elongatus (strain ATCC 33912 / PCC 7942 / FACHB-805) (Anacystis nidulans R2)).